An 83-amino-acid chain; its full sequence is Small ribosomal subunit protein eS21 (83 aa).

It belongs to the eukaryotic ribosomal protein eS21 family. As to quaternary structure, component of the 40S small ribosomal subunit.

It is found in the cytoplasm. It localises to the cytosol. Its subcellular location is the rough endoplasmic reticulum. The chain is Small ribosomal subunit protein eS21 (RpS21) from Spodoptera frugiperda (Fall armyworm).